The following is a 487-amino-acid chain: MSLPPIRLPSPYGSDRLVQLAARLRPALCDTLITVGGQEFPAHSLVLAGVSQQLGRRGQWALGEGISPSTFAQLLNFVYGESVELQPRELRPLQEAARALGVQSLEEACWRARGDRAKKPDPGLKKHQEEPEKPSRNAERELGDPGEKQKPEQVSRTGGREQEMLHKHSPPRGSPEMAGATQEAQQEQTRSKEKHLQAPVGQRGADGKHGVLMWLRENPGGSEESLHKLPGPLPPAGSLQTSVTPRPSWAEAPWLVGGQPALWSILLMPPRYGIPFYHSTPTTGAWQEVWREHRIPLSLNAPKGLWSQNQLASSSPTPGSLPQGPAQLSPGEMEESDQGHTGALATCAGHEDKAGCPPRPHPPPAPPARSRPYACSVCGKRFSLKHQMETHYRVHTGEKPFSCSLCPQRSRDFSAMTKHLRTHGAAPYRXXLCGAGCPSLASMQAHMRGHSPSQLPPGWTIRSTFLYSSSRPSRPSTSPCCPSSSTT.

The BTB domain maps to 29–87; it reads CDTLITVGGQEFPAHSLVLAGVSQQLGRRGQWALGEGISPSTFAQLLNFVYGESVELQP. A compositionally biased stretch (basic and acidic residues) spans 113–166; that stretch reads RGDRAKKPDPGLKKHQEEPEKPSRNAERELGDPGEKQKPEQVSRTGGREQEMLH. 2 disordered regions span residues 113–208 and 308–371; these read RGDR…ADGK and QNQL…ARSR. Polar residues predominate over residues 308-320; it reads QNQLASSSPTPGS. Over residues 357–369 the composition is skewed to pro residues; sequence PPRPHPPPAPPAR. 3 consecutive C2H2-type zinc fingers follow at residues 373-395, 401-423, and 428-450; these read YACS…YRVH, FSCS…LRTH, and YRXX…MRGH. Residues 468-487 form a disordered region; it reads SSSRPSRPSTSPCCPSSSTT.

It belongs to the krueppel C2H2-type zinc-finger protein family. Homodimer (via PTB domain). Interacts with the N-terminal of FANCC. Interacts with ZBTB16. Interacts with GATA3.

Its subcellular location is the nucleus. Its function is as follows. DNA-binding protein that binds to the to a 5'-TGTACAGTGT-3' core sequence. May function as a transcriptional transactivator and transcriptional repressor. Probably exerts its repressor effect by preventing GATA3 from binding to DNA. May play a role in regulating the differentiation and activation of helper T-cells. In Pan troglodytes (Chimpanzee), this protein is Zinc finger and BTB domain-containing protein 32 (ZBTB32).